The chain runs to 216 residues: Uracil phosphoribosyltransferase (216 aa).

5-phospho-alpha-D-ribose 1-diphosphate-binding positions include arginine 84, arginine 109, and 137-145 (DPMLATGGS). Residues isoleucine 202 and 207–209 (GDA) contribute to the uracil site. Aspartate 208 is a 5-phospho-alpha-D-ribose 1-diphosphate binding site.

This sequence belongs to the UPRTase family. It depends on Mg(2+) as a cofactor.

The enzyme catalyses UMP + diphosphate = 5-phospho-alpha-D-ribose 1-diphosphate + uracil. Its pathway is pyrimidine metabolism; UMP biosynthesis via salvage pathway; UMP from uracil: step 1/1. With respect to regulation, allosterically activated by GTP. In terms of biological role, catalyzes the conversion of uracil and 5-phospho-alpha-D-ribose 1-diphosphate (PRPP) to UMP and diphosphate. The polypeptide is Uracil phosphoribosyltransferase (Nostoc sp. (strain PCC 7120 / SAG 25.82 / UTEX 2576)).